A 127-amino-acid polypeptide reads, in one-letter code: Putative pre-16S rRNA nuclease (127 aa).

The protein belongs to the YqgF nuclease family.

It is found in the cytoplasm. Functionally, could be a nuclease involved in processing of the 5'-end of pre-16S rRNA. This chain is Putative pre-16S rRNA nuclease, found in Campylobacter jejuni subsp. jejuni serotype O:23/36 (strain 81-176).